Here is a 392-residue protein sequence, read N- to C-terminus: uncharacterized protein (392 aa).

This sequence belongs to the hcp1 family.

This is an uncharacterized protein from Escherichia coli (strain K12).